The chain runs to 366 residues: Chorismate synthase (366 aa).

Residues Arg48 and Arg54 each contribute to the NADP(+) site. Residues 125–127, 238–239, Gly278, 293–297, and Arg319 contribute to the FMN site; these read RSS, NA, and KPTSS.

It belongs to the chorismate synthase family. Homotetramer. It depends on FMNH2 as a cofactor.

It catalyses the reaction 5-O-(1-carboxyvinyl)-3-phosphoshikimate = chorismate + phosphate. It participates in metabolic intermediate biosynthesis; chorismate biosynthesis; chorismate from D-erythrose 4-phosphate and phosphoenolpyruvate: step 7/7. In terms of biological role, catalyzes the anti-1,4-elimination of the C-3 phosphate and the C-6 proR hydrogen from 5-enolpyruvylshikimate-3-phosphate (EPSP) to yield chorismate, which is the branch point compound that serves as the starting substrate for the three terminal pathways of aromatic amino acid biosynthesis. This reaction introduces a second double bond into the aromatic ring system. This is Chorismate synthase from Burkholderia ambifaria (strain MC40-6).